A 146-amino-acid polypeptide reads, in one-letter code: D-aminoacyl-tRNA deacylase (146 aa).

The Gly-cisPro motif, important for rejection of L-amino acids signature appears at 137 to 138 (GP).

The protein belongs to the DTD family. Homodimer.

Its subcellular location is the cytoplasm. It catalyses the reaction glycyl-tRNA(Ala) + H2O = tRNA(Ala) + glycine + H(+). The enzyme catalyses a D-aminoacyl-tRNA + H2O = a tRNA + a D-alpha-amino acid + H(+). An aminoacyl-tRNA editing enzyme that deacylates mischarged D-aminoacyl-tRNAs. Also deacylates mischarged glycyl-tRNA(Ala), protecting cells against glycine mischarging by AlaRS. Acts via tRNA-based rather than protein-based catalysis; rejects L-amino acids rather than detecting D-amino acids in the active site. By recycling D-aminoacyl-tRNA to D-amino acids and free tRNA molecules, this enzyme counteracts the toxicity associated with the formation of D-aminoacyl-tRNA entities in vivo and helps enforce protein L-homochirality. The sequence is that of D-aminoacyl-tRNA deacylase from Anoxybacillus flavithermus (strain DSM 21510 / WK1).